We begin with the raw amino-acid sequence, 1641 residues long: Maestro heat-like repeat-containing protein family member 1 (1641 aa).

HEAT repeat units lie at residues 3–41, 159–198, 344–382, 385–423, 1048–1086, 1358–1396, and 1605–1641; these read ESSM…ARPV, VPFL…GALE, CSSP…SAAA, EDKK…HGYL, PDQL…ERGG, LMLL…GCPD, and QVDL…VKLA.

This sequence belongs to the MROH1 family. In terms of assembly, homooligomer; homooligomerizes at lysosome scission sites.

It localises to the lysosome membrane. Functionally, lysosome fission factor. Recruited to lysosomes by RAB7 (RAB7A or RAB7B) at scission sites and homooligomerizes to mediate the constriction and scission of lysosomal tubules. May sever membranes by inserting amphipathic helices into one bilayer leaflet. Lysosome fission is required to maintain their steady-state number, shape, size, composition and function, and to accomplish regeneration. This chain is Maestro heat-like repeat-containing protein family member 1, found in Homo sapiens (Human).